The sequence spans 407 residues: Endo-1,4-beta-xylanase D (407 aa).

An N-terminal signal peptide occupies residues 1-19; sequence MTLVKSILLALAAGHVAQA. The region spanning 20–333 is the GH10 domain; sequence QLNTAAKAAG…KPAYYGILAG (314 aa). Asn118 is a glycosylation site (N-linked (GlcNAc...) asparagine). Glu148 acts as the Proton donor in catalysis. Glu255 acts as the Nucleophile in catalysis. Cys283 and Cys289 are oxidised to a cystine. Residues 337-364 are disordered; it reads GSGSSSSTSSTTLITTTTPTASSSTTSA. Residues 371 to 407 form the CBM1 domain; sequence SGAAHWGQCGGIGWSGPTICVSPYTCQVLNPYYSQCL.

The protein belongs to the glycosyl hydrolase 10 (cellulase F) family.

The protein localises to the secreted. The catalysed reaction is Endohydrolysis of (1-&gt;4)-beta-D-xylosidic linkages in xylans.. The protein operates within glycan degradation; xylan degradation. Inhibited by wheat xylanase inhibiting protein I (XIP-I). In terms of biological role, endo-1,4-beta-xylanase involved in the hydrolysis of xylan, a major structural heterogeneous polysaccharide found in plant biomass representing the second most abundant polysaccharide in the biosphere, after cellulose. Shows an endo-mode of action on xylan forming mainly xylobiose and short-chain xylooligosaccharides (XOS). This Talaromyces funiculosus (Fruitlet core rot fungus) protein is Endo-1,4-beta-xylanase D (xynD).